The primary structure comprises 865 residues: Protein translocase subunit SecA (865 aa).

ATP contacts are provided by residues glutamine 85, 103–107 (GEGKT), and aspartate 505. Residues cysteine 847, cysteine 849, cysteine 858, and histidine 859 each contribute to the Zn(2+) site.

Belongs to the SecA family. As to quaternary structure, monomer and homodimer. Part of the essential Sec protein translocation apparatus which comprises SecA, SecYEG and auxiliary proteins SecDF. Other proteins may also be involved. The cofactor is Zn(2+).

The protein localises to the cell membrane. Its subcellular location is the cytoplasm. It catalyses the reaction ATP + H2O + cellular proteinSide 1 = ADP + phosphate + cellular proteinSide 2.. Functionally, part of the Sec protein translocase complex. Interacts with the SecYEG preprotein conducting channel. Has a central role in coupling the hydrolysis of ATP to the transfer of proteins into and across the cell membrane, serving as an ATP-driven molecular motor driving the stepwise translocation of polypeptide chains across the membrane. This is Protein translocase subunit SecA from Lactococcus lactis subsp. cremoris (strain MG1363).